The following is a 175-amino-acid chain: Large ribosomal subunit protein bL17m (175 aa).

The transit peptide at 1 to 8 (MRLSVCAA) directs the protein to the mitochondrion. The segment at 155–175 (DLSQSQEASNHSSHTAQTPGI) is disordered. Residues 157–175 (SQSQEASNHSSHTAQTPGI) are compositionally biased toward polar residues.

The protein belongs to the bacterial ribosomal protein bL17 family. Component of the mitochondrial ribosome large subunit (39S) which comprises a 16S rRNA and about 50 distinct proteins.

It localises to the mitochondrion. The sequence is that of Large ribosomal subunit protein bL17m (MRPL17) from Pongo abelii (Sumatran orangutan).